Here is a 419-residue protein sequence, read N- to C-terminus: Tyrosine--tRNA ligase (419 aa).

Tyr34 lines the L-tyrosine pocket. The 'HIGH' region signature appears at 39-48 (PSGDSMHIGH). Tyr168 and Gln172 together coordinate L-tyrosine. A 'KMSKS' region motif is present at residues 230 to 234 (KFGKS). Position 233 (Lys233) interacts with ATP. The S4 RNA-binding domain maps to 352 to 418 (ANLVDWLVTL…GKKKYFLVSY (67 aa)).

The protein belongs to the class-I aminoacyl-tRNA synthetase family. TyrS type 1 subfamily. As to quaternary structure, homodimer.

The protein localises to the cytoplasm. The catalysed reaction is tRNA(Tyr) + L-tyrosine + ATP = L-tyrosyl-tRNA(Tyr) + AMP + diphosphate + H(+). Its function is as follows. Catalyzes the attachment of tyrosine to tRNA(Tyr) in a two-step reaction: tyrosine is first activated by ATP to form Tyr-AMP and then transferred to the acceptor end of tRNA(Tyr). The protein is Tyrosine--tRNA ligase of Listeria monocytogenes serotype 4b (strain CLIP80459).